The sequence spans 253 residues: 5'/3'-nucleotidase SurE (253 aa).

A divalent metal cation-binding residues include aspartate 8, aspartate 9, serine 39, and asparagine 92.

This sequence belongs to the SurE nucleotidase family. The cofactor is a divalent metal cation.

The protein localises to the cytoplasm. It carries out the reaction a ribonucleoside 5'-phosphate + H2O = a ribonucleoside + phosphate. It catalyses the reaction a ribonucleoside 3'-phosphate + H2O = a ribonucleoside + phosphate. The enzyme catalyses [phosphate](n) + H2O = [phosphate](n-1) + phosphate + H(+). In terms of biological role, nucleotidase with a broad substrate specificity as it can dephosphorylate various ribo- and deoxyribonucleoside 5'-monophosphates and ribonucleoside 3'-monophosphates with highest affinity to 3'-AMP. Also hydrolyzes polyphosphate (exopolyphosphatase activity) with the preference for short-chain-length substrates (P20-25). Might be involved in the regulation of dNTP and NTP pools, and in the turnover of 3'-mononucleotides produced by numerous intracellular RNases (T1, T2, and F) during the degradation of various RNAs. This chain is 5'/3'-nucleotidase SurE, found in Enterobacter sp. (strain 638).